A 1141-amino-acid polypeptide reads, in one-letter code: MSLHSLIFFSSSSSSLLFSFFFIFIFCFSLSDAEQNPEASILYSWLHSSSPTPSSLSLFNWNSIDNTPCNNWTFITCSSQGFITDIDIESVPLQLSLPKNLPAFRSLQKLTISGANLTGTLPESLGDCLGLKVLDLSSNGLVGDIPWSLSKLRNLETLILNSNQLTGKIPPDISKCSKLKSLILFDNLLTGSIPTELGKLSGLEVIRIGGNKEISGQIPSEIGDCSNLTVLGLAETSVSGNLPSSLGKLKKLETLSIYTTMISGEIPSDLGNCSELVDLFLYENSLSGSIPREIGQLTKLEQLFLWQNSLVGGIPEEIGNCSNLKMIDLSLNLLSGSIPSSIGRLSFLEEFMISDNKFSGSIPTTISNCSSLVQLQLDKNQISGLIPSELGTLTKLTLFFAWSNQLEGSIPPGLADCTDLQALDLSRNSLTGTIPSGLFMLRNLTKLLLISNSLSGFIPQEIGNCSSLVRLRLGFNRITGEIPSGIGSLKKINFLDFSSNRLHGKVPDEIGSCSELQMIDLSNNSLEGSLPNPVSSLSGLQVLDVSANQFSGKIPASLGRLVSLNKLILSKNLFSGSIPTSLGMCSGLQLLDLGSNELSGEIPSELGDIENLEIALNLSSNRLTGKIPSKIASLNKLSILDLSHNMLEGDLAPLANIENLVSLNISYNSFSGYLPDNKLFRQLSPQDLEGNKKLCSSTQDSCFLTYRKGNGLGDDGDASRTRKLRLTLALLITLTVVLMILGAVAVIRARRNIDNERDSELGETYKWQFTPFQKLNFSVDQIIRCLVEPNVIGKGCSGVVYRADVDNGEVIAVKKLWPAMVNGGHDEKTKNVRDSFSAEVKTLGTIRHKNIVRFLGCCWNRNTRLLMYDYMPNGSLGSLLHERRGSSLDWDLRYRILLGAAQGLAYLHHDCLPPIVHRDIKANNILIGLDFEPYIADFGLAKLVDEGDIGRCSNTVAGSYGYIAPEYGYSMKITEKSDVYSYGVVVLEVLTGKQPIDPTVPEGIHLVDWVRQNRGSLEVLDSTLRSRTEAEADEMMQVLGTALLCVNSSPDERPTMKDVAAMLKEIKQEREEYAKVDLLLKKSPPPTTTMQEECRKNEMMMIPAAAASSSKEMRREERLLKSNNTSFSASSLLYSSSSSIE.

A signal peptide spans 1 to 33 (MSLHSLIFFSSSSSSLLFSFFFIFIFCFSLSDA). Topologically, residues 34 to 726 (EQNPEASILY…DASRTRKLRL (693 aa)) are extracellular. C69 and C77 are joined by a disulfide. N71 carries N-linked (GlcNAc...) asparagine glycosylation. LRR repeat units lie at residues 80-104 (QGFI…LPAF), 105-128 (RSLQ…LGDC), 130-152 (GLKV…LSKL), 153-176 (RNLE…ISKC), 178-200 (KLKS…LGKL), 202-225 (GLEV…IGDC), 226-249 (SNLT…LGKL), 250-273 (KKLE…LGNC), 275-297 (ELVD…IGQL), 298-321 (TKLE…IGNC), 322-345 (SNLK…IGRL), 347-369 (FLEE…ISNC), 370-392 (SSLV…ELGT), 394-417 (TKLT…LADC), 418-441 (TDLQ…LFML), 443-464 (NLTK…EIGN), 465-489 (CSSL…IGSL), 490-513 (KKIN…IGSC), 514-537 (SELQ…VSSL), 538-561 (SGLQ…LGRL), 563-585 (SLNK…LGMC), 586-609 (SGLQ…LGDI), 610-634 (ENLE…IASL), 636-657 (KLSI…LANI), and 658-682 (ENLV…LFRQ). N-linked (GlcNAc...) asparagine glycosylation is present at N116. 2 consecutive short sequence motifs (small peptide recognition) follow at residues 185 to 186 (FD) and 207 to 210 (RIGG). The N-linked (GlcNAc...) asparagine glycan is linked to N227. 2 consecutive short sequence motifs (small peptide recognition) follow at residues 230 to 235 (VLGLAE) and Y258. N272 is a glycosylation site (N-linked (GlcNAc...) asparagine). The Small peptide recognition motif lies at 280–282 (FLY). N320 is a glycosylation site (N-linked (GlcNAc...) asparagine). 2 short sequence motifs (small peptide recognition) span residues 328-331 (DLSL) and 350-352 (EFM). Residue N368 is glycosylated (N-linked (GlcNAc...) asparagine). 2 short sequence motifs (small peptide recognition) span residues 398-402 (LFFAW) and 424-427 (DLSR). N443 is a glycosylation site (N-linked (GlcNAc...) asparagine). Positions 446–450 (KLLLI) match the Small peptide recognition motif. A glycan (N-linked (GlcNAc...) asparagine) is linked at N464. A Small peptide recognition motif is present at residues 470-472 (RLR). Residue N523 is glycosylated (N-linked (GlcNAc...) asparagine). N-linked (GlcNAc...) asparagine glycosylation occurs at N617. A glycan (N-linked (GlcNAc...) asparagine) is linked at N664. Residues 727-747 (TLALLITLTVVLMILGAVAVI) form a helical membrane-spanning segment. At 748 to 1141 (RARRNIDNER…LLYSSSSSIE (394 aa)) the chain is on the cytoplasmic side. The Protein kinase domain occupies 786–1074 (LVEPNVIGKG…EIKQEREEYA (289 aa)). Residues 792–800 (IGKGCSGVV) and K814 each bind ATP. Phosphotyrosine is present on residues Y868 and Y906. D919 serves as the catalytic Proton acceptor. Phosphotyrosine occurs at positions 962 and 969.

This sequence belongs to the protein kinase superfamily. Ser/Thr protein kinase family. Interacts with beet curly top virus AL4/C4. Binds to RGF peptides such as RGF1, GLV5/CLEL1/RGF2, GLV7/CLEL3/RGF3, GLV3/RGF4, GLV10/CLEL7/RGF5 and RGF10/CLELN; these interactions trigger the formation of heterodimers with SERK1, SERK2 or BAK1/SERK3 via LRR regions. Interacts with UBP13. In terms of processing, phosphorylated and ubiquitinated upon interaction with RGF1, thus leading to activation a subsequent degradation. Stabilized by UBP12 and UBP13-mediated deubiquitination. Autophosphorylated. As to expression, expressed in roots.

It localises to the cell membrane. It catalyses the reaction L-seryl-[protein] + ATP = O-phospho-L-seryl-[protein] + ADP + H(+). It carries out the reaction L-threonyl-[protein] + ATP = O-phospho-L-threonyl-[protein] + ADP + H(+). Functionally, together with RGI2, RGI3, RGI4 and RGI5, acts as a receptor of RGF peptides (e.g. RGF1, GLV5/CLEL1/RGF2, GLV7/CLEL3/RGF3, GLV3/RGF4, GLV10/CLEL7/RGF5 and RGF10/CLELN), peptide hormones which maintain the postembryonic root stem cell niche by regulating the expression levels and patterns of the transcription factor PLETHORA (PLT, e.g. PLT1 and PLT2). Links RGF peptides signal with their downstream components. In Arabidopsis thaliana (Mouse-ear cress), this protein is LRR receptor-like serine/threonine-protein kinase RGI1.